The sequence spans 185 residues: Lipid A acyltransferase PagP (185 aa).

An N-terminal signal peptide occupies residues 1-14 (MKLKPVLYLLMLLG). Cysteine 15 carries N-palmitoyl cysteine lipidation. Cysteine 15 carries S-diacylglycerol cysteine lipidation. Active-site residues include histidine 57, aspartate 100, and serine 101.

It belongs to the lipid A palmitoyltransferase family. In terms of assembly, homodimer.

The protein localises to the cell outer membrane. The catalysed reaction is a lipid A + a 1,2-diacyl-sn-glycero-3-phosphocholine = a hepta-acyl lipid A + a 2-acyl-sn-glycero-3-phosphocholine. It catalyses the reaction a lipid IVA + a 1,2-diacyl-sn-glycero-3-phosphocholine = a lipid IVB + a 2-acyl-sn-glycero-3-phosphocholine. It carries out the reaction a lipid IIA + a 1,2-diacyl-sn-glycero-3-phosphocholine = a lipid IIB + a 2-acyl-sn-glycero-3-phosphocholine. Its function is as follows. Transfers a fatty acid residue from the sn-1 position of a phospholipid to the N-linked hydroxyfatty acid chain on the proximal unit of lipid A or its precursors. This Erwinia pyrifoliae (strain DSM 12163 / CIP 106111 / Ep16/96) protein is Lipid A acyltransferase PagP.